A 355-amino-acid chain; its full sequence is MGCASSAEERAAPSAQQADREKLKEDGIQAAKDIKLLLLGAGESGKSTIVKQMKIIHESGFTNEDFKQYRPVVYSNTIQSLVAILRAMPTLGITYANKDRESDGKMVFDVIQRMEDTEPFSEELLAAMKRLWADAGVQECFGRSNEYQLNDSAKYFLDDLDRLGARDYQPTEEDILRTRVKTTGIVEVHFSFKNLNFKLFDVGRGQRSERKKWIHCFEDVTAIIFCVAMSEYDQVLHEDETTNRMQESLKLFDSICNNKWFTDTSIILFLNKKDLFEEKIRKSPLTICFPEYTRAYQEYGEAAAYIRSQFEAKNNSTTKEIYCHMTATDTNNNQFVFDAVTDVIIANNLRGCGLY.

Low complexity predominate over residues 1–17; the sequence is MGCASSAEERAAPSAQQ. The segment at 1–24 is disordered; it reads MGCASSAEERAAPSAQQADREKLK. Glycine 2 carries N-myristoyl glycine lipidation. Cysteine 3 carries S-palmitoyl cysteine lipidation. One can recognise a G-alpha domain in the interval 32-355; that stretch reads KDIKLLLLGA…ANNLRGCGLY (324 aa). A G1 motif region spans residues 35-48; sequence KLLLLGAGESGKST. GTP contacts are provided by residues 40–47, 176–182, 201–205, 201–206, 271–274, and alanine 327; these read GAGESGKS, LRTRVKT, DVGRG, DVGRGQ, and NKKD. Positions 47 and 182 each coordinate Mg(2+). Residues 174–182 form a G2 motif region; the sequence is DILRTRVKT. A G3 motif region spans residues 197-206; it reads FKLFDVGRGQ. The interval 267–274 is G4 motif; it reads ILFLNKKD. Residues 326-330 are G5 motif; that stretch reads TATDT.

This sequence belongs to the G-alpha family. G(i/o/t/z) subfamily. G proteins are composed of 3 units; alpha, beta and gamma. The alpha chain contains the guanine nucleotide binding site.

Its function is as follows. Guanine nucleotide-binding proteins (G proteins) are involved as modulators or transducers in various transmembrane signaling systems. The G(o) protein function is not clear. This chain is Guanine nucleotide-binding protein G(o) subunit alpha, found in Manduca sexta (Tobacco hawkmoth).